Here is a 386-residue protein sequence, read N- to C-terminus: Succinyl-diaminopimelate desuccinylase (386 aa).

Histidine 73 contacts Zn(2+). Residue aspartate 75 is part of the active site. Aspartate 106 is a Zn(2+) binding site. Glutamate 140 serves as the catalytic Proton acceptor. Zn(2+) is bound by residues glutamate 141, glutamate 169, and histidine 355.

The protein belongs to the peptidase M20A family. DapE subfamily. Homodimer. The cofactor is Zn(2+). It depends on Co(2+) as a cofactor.

The enzyme catalyses N-succinyl-(2S,6S)-2,6-diaminopimelate + H2O = (2S,6S)-2,6-diaminopimelate + succinate. It participates in amino-acid biosynthesis; L-lysine biosynthesis via DAP pathway; LL-2,6-diaminopimelate from (S)-tetrahydrodipicolinate (succinylase route): step 3/3. Its function is as follows. Catalyzes the hydrolysis of N-succinyl-L,L-diaminopimelic acid (SDAP), forming succinate and LL-2,6-diaminopimelate (DAP), an intermediate involved in the bacterial biosynthesis of lysine and meso-diaminopimelic acid, an essential component of bacterial cell walls. The chain is Succinyl-diaminopimelate desuccinylase from Delftia acidovorans (strain DSM 14801 / SPH-1).